The primary structure comprises 359 residues: Trans-enoyl reductase mpsG (359 aa).

NADP(+) contacts are provided by tyrosine 212, leucine 259, and threonine 278.

This sequence belongs to the zinc-containing alcohol dehydrogenase family. Monomer.

It functions in the pathway secondary metabolite biosynthesis. Trans-enoyl reductase; part of the gene cluster that mediates the biosynthesis of macrophasetins, 3-decalinoyltetramic acids (DTAs) which feature a tetramate (pyrrolidine-2,4-dione) unit connected to a decalin fragment and that have potent bioactivities. The PKS-NRPS mpsA together with its associated enoylreductase partner mpsG incorporate one unit of acetyl-CoA, seven units of malonyl-CoA, and one unit of L-alanine to assemble the linear tetramic acid intermediate corresponding to the backbone of macrophasetins. Without the Diels-Alderase mpsD, the mpsA/G product can undergo the non-enzymatic intramolecular Diels-Alder (IMDA) reaction to generate both macrophasetin A and macrophasetin B. Catalyzed by mpsD, the linear tetramic acid intermediate is thoroughly converted to macrophasetin A via the endo-IMDA reaction in a regioselective and stereoselective manner. Finally, the cytochrome P450 monooxygenase mpsF catalyzes the hydroxylation at C20 to yield the end product macrophasetin C. The polypeptide is Trans-enoyl reductase mpsG (Macrophomina phaseolina (strain MS6) (Charcoal rot fungus)).